Consider the following 107-residue polypeptide: Small ribosomal subunit protein uS17 (107 aa).

It belongs to the universal ribosomal protein uS17 family. Part of the 30S ribosomal subunit.

Functionally, one of the primary rRNA binding proteins, it binds specifically to the 5'-end of 16S ribosomal RNA. The polypeptide is Small ribosomal subunit protein uS17 (Thermotoga sp. (strain RQ2)).